The chain runs to 429 residues: Xaa-Pro dipeptidase (429 aa).

The Mn(2+) site is built by D241, D252, H334, E372, and E411.

Belongs to the peptidase M24B family. Bacterial-type prolidase subfamily. The cofactor is Mn(2+).

It carries out the reaction Xaa-L-Pro dipeptide + H2O = an L-alpha-amino acid + L-proline. Functionally, splits dipeptides with a prolyl residue in the C-terminal position. This chain is Xaa-Pro dipeptidase, found in Marinobacter nauticus (strain ATCC 700491 / DSM 11845 / VT8) (Marinobacter aquaeolei).